We begin with the raw amino-acid sequence, 383 residues long: Glutamyl-tRNA reductase (383 aa).

Substrate contacts are provided by residues 38–41 (TCNR), Ser82, 87–89 (EDQ), and Gln93. The active-site Nucleophile is Cys39. 161-166 (GAGEIA) is a binding site for NADP(+).

The protein belongs to the glutamyl-tRNA reductase family. In terms of assembly, homodimer.

The enzyme catalyses (S)-4-amino-5-oxopentanoate + tRNA(Glu) + NADP(+) = L-glutamyl-tRNA(Glu) + NADPH + H(+). Its pathway is porphyrin-containing compound metabolism; protoporphyrin-IX biosynthesis; 5-aminolevulinate from L-glutamyl-tRNA(Glu): step 1/2. Catalyzes the NADPH-dependent reduction of glutamyl-tRNA(Glu) to glutamate 1-semialdehyde (GSA). This chain is Glutamyl-tRNA reductase, found in Methanococcus aeolicus (strain ATCC BAA-1280 / DSM 17508 / OCM 812 / Nankai-3).